The primary structure comprises 325 residues: NADH-quinone oxidoreductase subunit H (325 aa).

9 helical membrane passes run 11 to 31 (ILLS…CGAF), 50 to 69 (NRVG…KMFF), 81 to 101 (VIFT…FAIV), 114 to 134 (IGIL…LFAG), 154 to 174 (VSYE…AGSF), 186 to 206 (LWNV…GVAV), 237 to 257 (FFVG…TLFF), 265 to 285 (LPPF…FILI), and 304 to 324 (VCLP…LWQA).

It belongs to the complex I subunit 1 family. As to quaternary structure, NDH-1 is composed of 13 different subunits. Subunits NuoA, H, J, K, L, M, N constitute the membrane sector of the complex.

It is found in the cell inner membrane. The catalysed reaction is a quinone + NADH + 5 H(+)(in) = a quinol + NAD(+) + 4 H(+)(out). In terms of biological role, NDH-1 shuttles electrons from NADH, via FMN and iron-sulfur (Fe-S) centers, to quinones in the respiratory chain. The immediate electron acceptor for the enzyme in this species is believed to be ubiquinone. Couples the redox reaction to proton translocation (for every two electrons transferred, four hydrogen ions are translocated across the cytoplasmic membrane), and thus conserves the redox energy in a proton gradient. This subunit may bind ubiquinone. This chain is NADH-quinone oxidoreductase subunit H, found in Salmonella arizonae (strain ATCC BAA-731 / CDC346-86 / RSK2980).